Here is a 395-residue protein sequence, read N- to C-terminus: G-protein coupled receptor 182 (395 aa).

The Extracellular segment spans residues 1–53 (MSVIPSPRPVSTLEPDNDFRDIHNWTELLHLFNQTFTDCHIEFNENTKHVVLF). N-linked (GlcNAc...) asparagine glycans are attached at residues asparagine 24 and asparagine 33. The chain crosses the membrane as a helical span at residues 54 to 75 (VFYLAIFVVGLVENVLVICVNC). Over 76-86 (RRSGRVGMLNL) the chain is Cytoplasmic. The chain crosses the membrane as a helical span at residues 87–109 (YILNMAIADLGIILSLPVWMLEV). The Extracellular portion of the chain corresponds to 110–123 (MLEYTWLWGSFSCR). A disulfide bond links cysteine 122 and cysteine 198. A helical transmembrane segment spans residues 124-145 (FIHYFYLVNMYSSIFFLTCLSI). At 146–166 (DRYVTLTNTSPSWQRHQHRIR) the chain is on the cytoplasmic side. Residues 167 to 189 (RAVCAGVWVLSAIIPLPEVVHIQ) form a helical membrane-spanning segment. The Extracellular portion of the chain corresponds to 190 to 213 (LLDGSEPMCLFLAPFETYSAWALA). Residues 214–235 (VALSATILGFLLPFLLIAVFNI) traverse the membrane as a helical segment. Residues 236-254 (LTACRLRRQRQTESRRHCL) are Cytoplasmic-facing. The chain crosses the membrane as a helical span at residues 255-276 (LMWAYIVVFAICWLPYQVTMLL). Topologically, residues 277-295 (LTLHGTHIFLHCHLVNLLY) are extracellular. A helical membrane pass occupies residues 296-316 (FFYEIIDCFSMLHCVANPILY). Residues 317-395 (NFLSPSFRGR…QTPHLHSAIL (79 aa)) are Cytoplasmic-facing. Phosphoserine is present on serine 329.

This sequence belongs to the G-protein coupled receptor 1 family. As to expression, expressed in liver and lung.

It localises to the cell membrane. Orphan receptor. The protein is G-protein coupled receptor 182 (Gpr182) of Mus musculus (Mouse).